Consider the following 520-residue polypeptide: GMP synthase [glutamine-hydrolyzing] (520 aa).

One can recognise a Glutamine amidotransferase type-1 domain in the interval 12-205 (KIIVLDYGSQ…AISICGGRGD (194 aa)). Residue cysteine 89 is the Nucleophile of the active site. Active-site residues include histidine 179 and glutamate 181. The 190-residue stretch at 206–395 (WSMDNFIDMQ…LGMPDEVVWR (190 aa)) folds into the GMPS ATP-PPase domain. 233–239 (SGGVDSS) is a binding site for ATP.

As to quaternary structure, homodimer.

It catalyses the reaction XMP + L-glutamine + ATP + H2O = GMP + L-glutamate + AMP + diphosphate + 2 H(+). It participates in purine metabolism; GMP biosynthesis; GMP from XMP (L-Gln route): step 1/1. Catalyzes the synthesis of GMP from XMP. The chain is GMP synthase [glutamine-hydrolyzing] from Streptococcus equi subsp. equi (strain 4047).